We begin with the raw amino-acid sequence, 206 residues long: Bis(5'-adenosyl)-triphosphatase (206 aa).

Residues 3–115 form the HIT domain; the sequence is KPIYFSKFLV…KINNVGDLIY (113 aa). Positions 96–100 match the Histidine triad motif motif; sequence HLHTH. Catalysis depends on His98, which acts as the Tele-AMP-histidine intermediate. The tract at residues 143 to 164 is disordered; it reads RQARKNNSTSATVDGDELSQGP.

As to quaternary structure, homodimer. It depends on Mn(2+) as a cofactor.

The protein resides in the cytoplasm. Its subcellular location is the nucleus. It is found in the mitochondrion. It catalyses the reaction P(1),P(3)-bis(5'-adenosyl) triphosphate + H2O = AMP + ADP + 2 H(+). In terms of biological role, cleaves A-5'-PPP-5'A to yield AMP and ADP. Can cleave all dinucleoside polyphosphates, provided the phosphate chain contains at least 3 phosphates and that 1 of the 2 bases composing the nucleotide is a purine. Is most effective on dinucleoside triphosphates. Negatively regulates intracellular dinucleoside polyphosphate levels, which elevate following heat shock. This chain is Bis(5'-adenosyl)-triphosphatase (HNT2), found in Saccharomyces cerevisiae (strain RM11-1a) (Baker's yeast).